A 299-amino-acid chain; its full sequence is Nicotinate-nucleotide pyrophosphorylase [carboxylating] (299 aa).

The tract at residues 8–12 (FLLPP) is important for hexamer formation. Quinolinate-binding positions include arginine 102, 138 to 139 (RK), 160 to 161 (HR), lysine 171, glutamate 201, aspartate 222, 248 to 250 (SGG), and glycine 270.

This sequence belongs to the NadC/ModD family. Hexamer formed by 3 homodimers.

The catalysed reaction is nicotinate beta-D-ribonucleotide + CO2 + diphosphate = quinolinate + 5-phospho-alpha-D-ribose 1-diphosphate + 2 H(+). The protein operates within cofactor biosynthesis; NAD(+) biosynthesis; nicotinate D-ribonucleotide from quinolinate: step 1/1. Its function is as follows. Involved in the catabolism of quinolinic acid (QA). This Rattus norvegicus (Rat) protein is Nicotinate-nucleotide pyrophosphorylase [carboxylating] (Qprt).